We begin with the raw amino-acid sequence, 270 residues long: Transcriptional regulator BrlR (270 aa).

Residue M1 coordinates 3',3'-c-di-GMP. The region spanning 1 to 71 (MLTIGQLARI…LEAIDRLKRD (71 aa)) is the HTH merR-type domain. Positions 4-23 (IGQLARIFEISTKTLRHYDA) form a DNA-binding region, H-T-H motif. Residues R31, S34, D35, Y40, R67, R70, R86, and Y270 each coordinate 3',3'-c-di-GMP. The involved in effector-binding, probably including pyocyanine-binding stretch occupies residues 120 to 270 (MHARIVERPA…SQVDLYIPIY (151 aa)).

Monomer. Homodimer; dimer formation enhanced in the presence of the second messenger, cyclic di-GMP (c-di-GMP). Homotetramer; dimer of dimers, arranged in a head-to-tail fashion, which may reduce DNA-binding ability. Conformational changes upon binding c-di-GMP or pyocyanine may facilitate DNA binding.

Its function is as follows. Transcriptional regulator. Responsive to the second messenger cyclic di-GMP (c-di-GMP) and to the virulence factor pyocyanine, which both enhance gene expression and promoter DNA binding of BrlR. Activates expression of operons encoding the multidrug efflux pumps MexAB-OprM and MexEF-OprN and several ABC transport systems, acting by direct binding to their respective promoters. Also acts as a repressor of the two component regulatory system, PhoPQ. Binds to promoter of its own gene. Contributes to the antimicrobial tolerance exhibited by biofilms, acting, at least in part, by activating expression of multidrug efflux pumps and ABC transporters. The polypeptide is Transcriptional regulator BrlR (Pseudomonas aeruginosa (strain ATCC 15692 / DSM 22644 / CIP 104116 / JCM 14847 / LMG 12228 / 1C / PRS 101 / PAO1)).